The following is a 1058-amino-acid chain: Carbamoyl phosphate synthase large chain (1058 aa).

Residues 1–401 are carboxyphosphate synthetic domain; it reads MPKRKDIKTI…SLLKAIRSLE (401 aa). ATP is bound by residues R129, R169, G175, G176, K208, I210, E215, G241, I242, H243, Q284, and E298. The ATP-grasp 1 domain maps to 133-327; the sequence is RDLMNELNEP…IAKIAAKIAV (195 aa). 3 residues coordinate Mg(2+): Q284, E298, and N300. The Mn(2+) site is built by Q284, E298, and N300. An oligomerization domain region spans residues 402–546; it reads YGVHHLGLPN…YSTYEFENES (145 aa). A carbamoyl phosphate synthetic domain region spans residues 547–929; that stretch reads TRSDKEKIVV…ALYKGLTAAG (383 aa). In terms of domain architecture, ATP-grasp 2 spans 671–861; sequence EKLLIGLKIP…VANIAMQCIL (191 aa). Residues R707, R746, L748, E752, G777, V778, H779, S780, Q820, and E832 each coordinate ATP. Positions 820, 832, and 834 each coordinate Mg(2+). Mn(2+) is bound by residues Q820, E832, and N834. Positions 930–1058 constitute an MGS-like domain; sequence IKIKDYGRVL…ESMSFRVQTL (129 aa). The tract at residues 930-1058 is allosteric domain; that stretch reads IKIKDYGRVL…ESMSFRVQTL (129 aa).

This sequence belongs to the CarB family. In terms of assembly, composed of two chains; the small (or glutamine) chain promotes the hydrolysis of glutamine to ammonia, which is used by the large (or ammonia) chain to synthesize carbamoyl phosphate. Tetramer of heterodimers (alpha,beta)4. Mg(2+) serves as cofactor. Requires Mn(2+) as cofactor.

It catalyses the reaction hydrogencarbonate + L-glutamine + 2 ATP + H2O = carbamoyl phosphate + L-glutamate + 2 ADP + phosphate + 2 H(+). The enzyme catalyses hydrogencarbonate + NH4(+) + 2 ATP = carbamoyl phosphate + 2 ADP + phosphate + 2 H(+). It participates in amino-acid biosynthesis; L-arginine biosynthesis; carbamoyl phosphate from bicarbonate: step 1/1. It functions in the pathway pyrimidine metabolism; UMP biosynthesis via de novo pathway; (S)-dihydroorotate from bicarbonate: step 1/3. Its function is as follows. Large subunit of the glutamine-dependent carbamoyl phosphate synthetase (CPSase). CPSase catalyzes the formation of carbamoyl phosphate from the ammonia moiety of glutamine, carbonate, and phosphate donated by ATP, constituting the first step of 2 biosynthetic pathways, one leading to arginine and/or urea and the other to pyrimidine nucleotides. The large subunit (synthetase) binds the substrates ammonia (free or transferred from glutamine from the small subunit), hydrogencarbonate and ATP and carries out an ATP-coupled ligase reaction, activating hydrogencarbonate by forming carboxy phosphate which reacts with ammonia to form carbamoyl phosphate. In Fusobacterium nucleatum subsp. nucleatum (strain ATCC 25586 / DSM 15643 / BCRC 10681 / CIP 101130 / JCM 8532 / KCTC 2640 / LMG 13131 / VPI 4355), this protein is Carbamoyl phosphate synthase large chain.